A 753-amino-acid chain; its full sequence is Neuroendocrine convertase 1 (753 aa).

The signal sequence occupies residues 1–27 (MEQRGWTLQCTAFAFFCVWCALSSVKA). A propeptide spanning residues 28-110 (KRQFVNEWAA…QQYEKERSKR (83 aa)) is cleaved from the precursor. The region spanning 129 to 450 (QWYLQDTRMT…FGLLNAKALV (322 aa)) is the Peptidase S8 domain. Residues D167 and H208 each act as charge relay system in the active site. 2 cysteine pairs are disulfide-bonded: C225-C374 and C317-C347. The active-site Charge relay system is S382. N401 is a glycosylation site (N-linked (GlcNAc...) asparagine). A P/Homo B domain is found at 460-597 (NVPEKKECVV…KLILHGTSSQ (138 aa)). C467 and C494 are joined by a disulfide. Over residues 633–651 (QKSLNGNLLVPKNSSSSNV) the composition is skewed to polar residues. The disordered stretch occupies residues 633–663 (QKSLNGNLLVPKNSSSSNVEGRRDEQVQGTP). N645 carries N-linked (GlcNAc...) asparagine glycosylation.

This sequence belongs to the peptidase S8 family. Furin subfamily. Ca(2+) serves as cofactor.

It localises to the cytoplasmic vesicle. The protein localises to the secretory vesicle. The enzyme catalyses Release of protein hormones, neuropeptides and renin from their precursors, generally by hydrolysis of -Lys-Arg-|- bonds.. In terms of biological role, involved in the processing of hormone and other protein precursors at sites comprised of pairs of basic amino acid residues. Substrates include POMC, renin, enkephalin, dynorphin, somatostatin, insulin and AGRP. The polypeptide is Neuroendocrine convertase 1 (Pcsk1) (Mus cookii (Cook's mouse)).